Reading from the N-terminus, the 41-residue chain is MRTTLLLLIIAITVMVFVSEAYAAPAPEPILKQGTIESLTR.

The first 29 residues, 1-29 (MRTTLLLLIIAITVMVFVSEAYAAPAPEP), serve as a signal peptide directing secretion.

Belongs to the caterpillar 11 family. As to expression, expressed by the venom apparatus.

It is found in the secreted. Probable toxin. The protein is U-megalopygitoxin(11)-Mo28 of Megalopyge opercularis (Southern flannel moth).